The sequence spans 70 residues: Insulin (70 aa).

Cystine bridges form between Cys-7/Cys-56, Cys-19/Cys-69, and Cys-55/Cys-60. Residues 33–49 (FVDSLAGYSKHQNGGIS) constitute a propeptide, c peptide.

This sequence belongs to the insulin family. In terms of assembly, heterodimer of a B chain and an A chain linked by two disulfide bonds.

It localises to the secreted. Insulin decreases blood glucose concentration. It increases cell permeability to monosaccharides, amino acids and fatty acids. It accelerates glycolysis, the pentose phosphate cycle, and glycogen synthesis in liver. The polypeptide is Insulin (ins) (Torpedo marmorata (Marbled electric ray)).